The sequence spans 518 residues: 2-isopropylmalate synthase (518 aa).

The 264-residue stretch at 5 to 268 (IIIFDTTLRD…DTRINTQEIH (264 aa)) folds into the Pyruvate carboxyltransferase domain. 4 residues coordinate Mn(2+): D14, H202, H204, and N238. The tract at residues 393–518 (TLDVITSQCI…DLKLHKIAGV (126 aa)) is regulatory domain.

The protein belongs to the alpha-IPM synthase/homocitrate synthase family. LeuA type 1 subfamily. Homodimer. Requires Mn(2+) as cofactor.

The protein resides in the cytoplasm. The catalysed reaction is 3-methyl-2-oxobutanoate + acetyl-CoA + H2O = (2S)-2-isopropylmalate + CoA + H(+). The protein operates within amino-acid biosynthesis; L-leucine biosynthesis; L-leucine from 3-methyl-2-oxobutanoate: step 1/4. Its function is as follows. Catalyzes the condensation of the acetyl group of acetyl-CoA with 3-methyl-2-oxobutanoate (2-ketoisovalerate) to form 3-carboxy-3-hydroxy-4-methylpentanoate (2-isopropylmalate). This is 2-isopropylmalate synthase from Pasteurella multocida (strain Pm70).